The primary structure comprises 640 residues: Auxin efflux carrier component 3 (640 aa).

At 1-7 (MISWHDL) the chain is on the extracellular side. The helical transmembrane segment at 8–28 (YTVLTAVIPLYVAMILAYGSV) threads the bilayer. Residues 29–38 (RWWKIFSPDQ) lie on the Cytoplasmic side of the membrane. The chain crosses the membrane as a helical span at residues 39-59 (CSGINRFVAIFAVPLLSFHFI). (indol-3-yl)acetate is bound at residue valine 51. At 60–71 (STNNPYAMNLRF) the chain is on the extracellular side. The helical transmembrane segment at 72–92 (IAADTLQKIIMLSLLVLWANF) threads the bilayer. Over 93–101 (TRSGSLEWS) the chain is Cytoplasmic. A helical transmembrane segment spans residues 102–122 (ITIFSLSTLPNTLVMGIPLLI). Asparagine 112 and leucine 114 together coordinate (indol-3-yl)acetate. Topologically, residues 123–131 (AMYGEYSGS) are extracellular. Residues 132 to 152 (LMVQIVVLQCIIWYTLLLFLF) traverse the membrane as a helical segment. Tyrosine 145 provides a ligand contact to (indol-3-yl)acetate. The Cytoplasmic segment spans residues 153–500 (EFRGAKMLIM…LIRNPNTYSS (348 aa)). 3 positions are modified to phosphoserine: serine 226, serine 243, and serine 283. The interval 310–351 (APNPEFSSTTTSTANKSVNKNPKDVNTNQQTTLPTGGKSNSH) is disordered. Residues 314–348 (EFSSTTTSTANKSVNKNPKDVNTNQQTTLPTGGKS) are compositionally biased toward polar residues. Threonine 322 is modified (phosphothreonine). Residue serine 366 is modified to Phosphoserine. Disordered regions lie at residues 372–391 (AGLN…RSDQ) and 404–471 (SHNG…SQRK). A compositionally biased stretch (basic and acidic residues) spans 430 to 442 (GKEEEAERPKDAE). The span at 449 to 460 (APNSTAALQSKT) shows a compositional bias: polar residues. The chain crosses the membrane as a helical span at residues 501 to 521 (LIGLIWALVAFRWHVAMPKII). At 522-524 (QQS) the chain is on the extracellular side. A helical transmembrane segment spans residues 525 to 545 (ISILSDAGLGMAMFSLGLFMA). Residues 546-559 (LQPKLIACGNSVAT) lie on the Cytoplasmic side of the membrane. The chain crosses the membrane as a helical span at residues 560–580 (FAMAVRFLTGPAVMAVAAIAI). Topologically, residues 581–585 (GLRGD) are extracellular. The helical transmembrane segment at 586–606 (LLRVAIVQAALPQGIVPFVFA) threads the bilayer. (indol-3-yl)acetate contacts are provided by isoleucine 600 and valine 601. Topologically, residues 607–619 (KEYNVHPAILSTG) are cytoplasmic. A helical transmembrane segment spans residues 620–640 (VIFGMLIALPITLVYYILLGL).

Belongs to the auxin efflux carrier (TC 2.A.69.1) family. Homodimer. In terms of tissue distribution, predominantly expressed at the lateral side of shoot endodermis cells as well as root pericycle and columella cells.

It localises to the cell membrane. Its activity is regulated as follows. Auxin efflux carrier activity is competitively inhibited by naptalamate (N-1-naphthylphthalamic acid, NPA). Acts as a component of the auxin efflux carrier; this activity is enhanced when activated by PID-mediated phosphorylation. Seems to be involved in the lateral auxin transport system. Together with PIN4 and PIN7, involved in the connective auxin transport (CAT) that ensures communication across the shoot system, and modulates strigolactone-mediated shoot branching control. Binds auxins including indole-3-acetic acid (IAA). Coordinated polar localization of PIN3 is directly regulated by the vesicle trafficking process. In Arabidopsis thaliana (Mouse-ear cress), this protein is Auxin efflux carrier component 3.